A 63-amino-acid polypeptide reads, in one-letter code: Large ribosomal subunit protein bL28c (63 aa).

This sequence belongs to the bacterial ribosomal protein bL28 family.

The protein localises to the plastid. It localises to the chloroplast. The polypeptide is Large ribosomal subunit protein bL28c (rpl28) (Porphyra purpurea (Red seaweed)).